An 80-amino-acid chain; its full sequence is Cell division protein ZapB (80 aa).

A coiled-coil region spans residues 3 to 80 (FEVFEKLEAK…ALLGKMEDVQ (78 aa)).

This sequence belongs to the ZapB family. In terms of assembly, homodimer. The ends of the coiled-coil dimer bind to each other, forming polymers. Interacts with FtsZ.

The protein resides in the cytoplasm. In terms of biological role, non-essential, abundant cell division factor that is required for proper Z-ring formation. It is recruited early to the divisome by direct interaction with FtsZ, stimulating Z-ring assembly and thereby promoting cell division earlier in the cell cycle. Its recruitment to the Z-ring requires functional FtsA or ZipA. The sequence is that of Cell division protein ZapB from Photorhabdus laumondii subsp. laumondii (strain DSM 15139 / CIP 105565 / TT01) (Photorhabdus luminescens subsp. laumondii).